The sequence spans 191 residues: Thymidylate kinase (191 aa).

7–14 serves as a coordination point for ATP; the sequence is GVDGVGKS.

It belongs to the thymidylate kinase family.

The enzyme catalyses dTMP + ATP = dTDP + ADP. Phosphorylation of dTMP to form dTDP in both de novo and salvage pathways of dTTP synthesis. The sequence is that of Thymidylate kinase from Helicobacter pylori (strain HPAG1).